The sequence spans 251 residues: MGSKSYPTVSDEYLAAVGKAKRKLRGLIAEKNCAPLMLRLAWHSAGTFDVSSRTGGPFGTMKNPGEQSHAANAGLDIAVRLLDPIKDQLPILSYADFYQLAGVVAVEVTGGPEVPFHPGRQDKPEPPPEGRLPDATQGSDHLRQVFSAQMGLSDKDIVALSGGHTLGRCHKERSGFEGAWTSNPLIFDNSYFTELVSGEKEGLLQLPSDKALMADPAFRPLVEKYAADEDAFFADYAEAHLKLSELGFAEE.

The Proton acceptor role is filled by His43. A disordered region spans residues 113–137; that stretch reads EVPFHPGRQDKPEPPPEGRLPDATQ. The segment covering 119–132 has biased composition (basic and acidic residues); it reads GRQDKPEPPPEGRL. His164 contributes to the heme b binding site. K(+) is bound by residues Thr165, Thr181, Asn183, Ile186, and Asp188.

This sequence belongs to the peroxidase family. Ascorbate peroxidase subfamily. Requires heme b as cofactor. Expressed in aerial vegetative parts and reproductive organs. Expressed in roots, leaves, stems and flowers. Expressed in young leaves, internodes, blade ears, stems and anthers.

It localises to the cytoplasm. It carries out the reaction L-ascorbate + H2O2 = L-dehydroascorbate + 2 H2O. With respect to regulation, inhibited by p-chloromercuriphenylsulfonic acid (CMPSA). Its function is as follows. Plays a key role in hydrogen peroxide removal. Plays an important role in plant growth and development by protecting the seedlings from abiotic stresses through scavenging reactive oxygen species. Required for pollen viability. The sequence is that of L-ascorbate peroxidase 2, cytosolic from Oryza sativa subsp. japonica (Rice).